A 478-amino-acid chain; its full sequence is MAAAAAGGAPGPAPGPAGPPPPAAPTSAARAPPQALRRRGDSRRRQAALFFLNNISLDGRPPSLGPGGEKPPPPPAEAREPPAPPPPEPPTGLPARTPAPQGLLSPTQVPTGLGLDGQRQRKRVTSQRCSLEFLEDAVGCAPAQRTKHTSGSPRHKGLKKTHFIKNMRQYDTRNSRIVLICAKRSLCAAFSVLPYGEGLRISDLRVDSQKQRHPSGGVSVSSEMVFELEGVELGADGKVVSYAKFLYPTNALVTHKSDSHGLLPTPRPSVPRTLPGSRHKPAPTKSAPASTELGSDVGDTLEYNPNLLDDPQWPCGKHKRVLIFASYMTTVIEYVKPSDLKKDMNETFREKFPHVKLTLSKIRSLKREMRSLSEECSLEPVTVAMAYVYFEKLVLQGKLSKQNRKLCAGACVLLAAKISSDLRKSGVTQLIDKLEERFRFNRRDLIGFEFTVLVALELALYLPENQVLPHYRRLTQQF.

Positions Met-1–Arg-121 are disordered. Over residues Gly-11 to Ala-24 the composition is skewed to pro residues. The segment covering Pro-25 to Ala-35 has biased composition (low complexity). Positions Leu-36–Gln-46 are enriched in basic residues. A compositionally biased stretch (pro residues) spans Glu-69–Gly-92. Ser-130 and Ser-208 each carry phosphoserine. Residues Ser-257–Asp-296 form a disordered region.

Belongs to the cyclin family. In terms of assembly, binds to CDK3, CDK5 and ABL1. The C-terminal cyclin-box-like region binds to CDK5.

Unknown. Probably involved in G1-S cell cycle transition. The sequence is that of CDK5 and ABL1 enzyme substrate 2 (CABLES2) from Homo sapiens (Human).